The primary structure comprises 248 residues: Mannose-binding protein C (248 aa).

The signal sequence occupies residues 1-20 (MSLIPSLSLLLMSMVAASYS). One can recognise a Collagen-like domain in the interval 42–99 (GINGFPGKDGRDGTKGEKGEPGQGLRGLQGPPGKLGPPGNPGPSGSPGPKGQKGDPGK). The interval 43 to 107 (INGFPGKDGR…GKSPDCDSSL (65 aa)) is disordered. Pro47 carries the 4-hydroxyproline modification. Residues 49–61 (KDGRDGTKGEKGE) are compositionally biased toward basic and acidic residues. 4-hydroxyproline occurs at positions 73, 79, 82, and 88. The span at 75 to 87 (KLGPPGNPGPSGS) shows a compositional bias: pro residues. Positions 93–102 (QKGDPGKSPD) are enriched in basic and acidic residues. A coiled-coil region spans residues 112 to 130 (RKALQTEMARIKKWLTFSL). One can recognise a C-type lectin domain in the interval 134-245 (VGNKFFLTNG…CSSSHLAVCE (112 aa)). Cystine bridges form between Cys155-Cys244 and Cys222-Cys236.

In terms of assembly, oligomeric complex of 3 or more homotrimers. Interacts with MASP1 and MASP2. Interacts with MEP1A and MEP1B and may inhibit their catalytic activity. In terms of processing, hydroxylation on proline residues within the sequence motif, GXPG, is most likely to be 4-hydroxy as this fits the requirement for 4-hydroxylation in vertebrates.

It localises to the secreted. Functionally, calcium-dependent lectin involved in innate immune defense. Binds mannose, fucose and N-acetylglucosamine on different microorganisms and activates the lectin complement pathway. Binds to late apoptotic cells, as well as to apoptotic blebs and to necrotic cells, but not to early apoptotic cells, facilitating their uptake by macrophages. The chain is Mannose-binding protein C (MBL2) from Hylobates lar (Lar gibbon).